A 511-amino-acid polypeptide reads, in one-letter code: Maturase K (511 aa).

Belongs to the intron maturase 2 family. MatK subfamily.

Its subcellular location is the plastid. The protein resides in the chloroplast. Usually encoded in the trnK tRNA gene intron. Probably assists in splicing its own and other chloroplast group II introns. This is Maturase K from Hordeum secalinum (Meadow barley).